The following is a 300-amino-acid chain: MTKASVAIVGSGNISTDLLYKLQRSEWLEPRWMIGIDPESEGLARARKMGLETSAEGVDWLLSQAEKPDLVFEATSAYVHREAAPRYEAAGIRAIDLTPAAVGPAVVPPANLREHLDAPNVNMITCGGQATIPIVYAVSRVVDVAYAEIVASVASLSAGPGTRANIDEFTKTTSRGIETIGGAQRGKAIIILNPADPPMIMRDTIFCAIPEDADQAAITDSIHRVVKDIQQYVPGYRLLNEPQFDKPSVVSGGYATVTTFVEVEGAGDFLPPYAGNLDIMTAAATKVGEEIAQKLLSVKA.

Position 11-14 (Ser-11–Ile-14) interacts with NAD(+). Residue Cys-126 is the Acyl-thioester intermediate of the active site. Residues Ser-157–Asn-165 and Asn-276 each bind NAD(+).

This sequence belongs to the acetaldehyde dehydrogenase family.

It carries out the reaction acetaldehyde + NAD(+) + CoA = acetyl-CoA + NADH + H(+). The protein is Acetaldehyde dehydrogenase 1 of Rhodococcus erythropolis (strain PR4 / NBRC 100887).